We begin with the raw amino-acid sequence, 374 residues long: MSIISRVCIPCAVLLFAQLHAKELVHVSQLKEQEARISWQEVPGAVSYRVLIRNAHGRIVTNAVATTRSYSFSRLRPGSYQYQIIAYDVLHRASASAWTSLSIEKVHKPKTGGITPSTIEHVVGGEAYTVVXDRXWTYEKGWTIALFPDDKADEAGAYVKPLSVSKNKEGNWMVAIPNAALKTGSYTLRAITPRNIYAEVRGILHVVLWRRPIFFYYDLSVGYAPVYRPQDHAATINGVSDFFKICSPIGFVGTFEMCFFKRNSSTISAGFNAQMHSDSKQVDVKLDGNFAYLYELYPRIEVGGMLGLGYSLPFGQRKEDDSMYSYVTGTMKYFFTNSIYLRVQQQHMLTVKPSFTGVSLQQTPSLSFGYRFHN.

An N-terminal signal peptide occupies residues 1 to 21; that stretch reads MSIISRVCIPCAVLLFAQLHA. Positions 22–102 constitute a Fibronectin type-III domain; sequence KELVHVSQLK…ASASAWTSLS (81 aa).

This is an uncharacterized protein from Treponema pallidum (strain Nichols).